Here is a 96-residue protein sequence, read N- to C-terminus: MSHGGKRRSGDGGSEGSSYSPLVYLKRPYFRKSRSCPLAQCPDEDIDYKNKVLLSKFVSEYGRILPSRITSVSARKQKLLARAIKRARYLALLPYC.

A disordered region spans residues 1–20 (MSHGGKRRSGDGGSEGSSYS).

The protein belongs to the bacterial ribosomal protein bS18 family. Part of the 30S ribosomal subunit. Forms a tight heterodimer with protein bS6.

Its function is as follows. Binds as a heterodimer with protein bS6 to the central domain of the 16S rRNA, where it helps stabilize the platform of the 30S subunit. This is Small ribosomal subunit protein bS18 from Anaplasma phagocytophilum (strain HZ).